The sequence spans 105 residues: Large ribosomal subunit protein bL21 (105 aa).

It belongs to the bacterial ribosomal protein bL21 family. As to quaternary structure, part of the 50S ribosomal subunit. Contacts protein L20.

Its function is as follows. This protein binds to 23S rRNA in the presence of protein L20. This is Large ribosomal subunit protein bL21 from Dictyoglomus thermophilum (strain ATCC 35947 / DSM 3960 / H-6-12).